We begin with the raw amino-acid sequence, 472 residues long: Poly(A) polymerase catalytic subunit (472 aa).

Residues aspartate 191 and aspartate 193 contribute to the active site.

The protein belongs to the poxviridae poly(A) polymerase catalytic subunit family. In terms of assembly, heterodimer of a large (catalytic) subunit and a small (regulatory) subunit.

The catalysed reaction is RNA(n) + ATP = RNA(n)-3'-adenine ribonucleotide + diphosphate. Polymerase that creates the 3'-poly(A) tail of mRNA's. The polypeptide is Poly(A) polymerase catalytic subunit (PAPL) (Capra hircus (Goat)).